The chain runs to 455 residues: Argininosuccinate lyase (455 aa).

The protein belongs to the lyase 1 family. Argininosuccinate lyase subfamily.

The protein localises to the cytoplasm. It carries out the reaction 2-(N(omega)-L-arginino)succinate = fumarate + L-arginine. The protein operates within amino-acid biosynthesis; L-arginine biosynthesis; L-arginine from L-ornithine and carbamoyl phosphate: step 3/3. This Roseiflexus castenholzii (strain DSM 13941 / HLO8) protein is Argininosuccinate lyase.